Consider the following 380-residue polypeptide: Cytochrome b (380 aa).

Transmembrane regions (helical) follow at residues Phe33–Met53, Trp77–Ile98, Trp113–Leu133, and Phe178–Phe198. Heme b is bound by residues His83 and His97. The heme b site is built by His182 and His196. His201 is an a ubiquinone binding site. The next 4 membrane-spanning stretches (helical) occupy residues Tyr226–Ser246, Leu288–His308, Leu320–Gly340, and Phe347–Pro367.

This sequence belongs to the cytochrome b family. As to quaternary structure, the cytochrome bc1 complex contains 3 respiratory subunits (MT-CYB, CYC1 and UQCRFS1), 2 core proteins (UQCRC1 and UQCRC2) and probably 6 low-molecular weight proteins. Requires heme b as cofactor.

It localises to the mitochondrion inner membrane. Functionally, component of the ubiquinol-cytochrome c reductase complex (complex III or cytochrome b-c1 complex) that is part of the mitochondrial respiratory chain. The b-c1 complex mediates electron transfer from ubiquinol to cytochrome c. Contributes to the generation of a proton gradient across the mitochondrial membrane that is then used for ATP synthesis. The protein is Cytochrome b (mt-cyb) of Zenopsis nebulosa (Mirror dory).